Consider the following 333-residue polypeptide: Probable pyridoxal reductase 2 (333 aa).

Tyr52 serves as the catalytic Proton donor.

The protein belongs to the aldo/keto reductase family.

It localises to the cytoplasm. The enzyme catalyses pyridoxine + NADP(+) = pyridoxal + NADPH + H(+). Catalyzes the reduction of pyridoxal (PL) with NADPH and oxidation of pyridoxine (PN) with NADP(+). The chain is Probable pyridoxal reductase 2 from Schizosaccharomyces pombe (strain 972 / ATCC 24843) (Fission yeast).